Reading from the N-terminus, the 250-residue chain is Probable transcriptional regulatory protein Paes_0496 (250 aa).

The protein belongs to the TACO1 family.

Its subcellular location is the cytoplasm. This chain is Probable transcriptional regulatory protein Paes_0496, found in Prosthecochloris aestuarii (strain DSM 271 / SK 413).